The following is a 134-amino-acid chain: uncharacterized protein (134 aa).

The protein resides in the mitochondrion. This is an uncharacterized protein from Saccharomyces cerevisiae (strain ATCC 204508 / S288c) (Baker's yeast).